A 124-amino-acid chain; its full sequence is MGNMGTSELLKHIYDINLSYLLLAQRLINDEKAFCKVFVGGIQGKGGAGYLDATGLLPQMVKLAETNQLICHFRFRRITITIQSLDSGNQRVDDLQQIHTGILLSSNLLQQLTSKEENLPKKRA.

The protein belongs to the FlhD family. As to quaternary structure, homodimer; disulfide-linked. Forms a heterohexamer composed of two FlhC and four FlhD subunits. Each FlhC binds a FlhD dimer, forming a heterotrimer, and a hexamer assembles by dimerization of two heterotrimers.

The protein resides in the cytoplasm. Functionally, functions in complex with FlhC as a master transcriptional regulator that regulates transcription of several flagellar and non-flagellar operons by binding to their promoter region. Activates expression of class 2 flagellar genes, including fliA, which is a flagellum-specific sigma factor that turns on the class 3 genes. Also regulates genes whose products function in a variety of physiological pathways. This chain is Flagellar transcriptional regulator FlhD, found in Pectobacterium carotovorum (Erwinia carotovora).